A 306-amino-acid polypeptide reads, in one-letter code: Phosphoadenosine phosphosulfate reductase (306 aa).

Disordered regions lie at residues 1-30 and 245-266; these read MPAK…VSGG and YHST…KGQA.

This sequence belongs to the PAPS reductase family. CysH subfamily.

It catalyses the reaction [thioredoxin]-disulfide + sulfite + adenosine 3',5'-bisphosphate + 2 H(+) = [thioredoxin]-dithiol + 3'-phosphoadenylyl sulfate. Its pathway is sulfur metabolism; hydrogen sulfide biosynthesis; sulfite from sulfate: step 3/3. Its function is as follows. The NADP dependent reduction of PAPS into sulfite involves thioredoxin which probably plays the role of a thiol carrier. The protein is Phosphoadenosine phosphosulfate reductase (sA) of Emericella nidulans (strain FGSC A4 / ATCC 38163 / CBS 112.46 / NRRL 194 / M139) (Aspergillus nidulans).